Reading from the N-terminus, the 467-residue chain is Transcription factor fos-1 (467 aa).

Low complexity predominate over residues Met1–Asn22. Disordered regions lie at residues Met1–Pro38 and Gln139–Arg179. The region spanning Asp163–His226 is the bZIP domain. Positions Lys165–Lys205 are basic motif. A leucine-zipper region spans residues Ile212–Leu219. Disordered stretches follow at residues Arg266 to Asp291 and Gln395 to Leu467. Residues Ser273–His286 show a composition bias toward low complexity. Over residues Ser434–Thr454 the composition is skewed to polar residues. 3 positions are modified to phosphothreonine: Thr440, Thr452, and Thr454.

This sequence belongs to the bZIP family. Fos subfamily. As to quaternary structure, homodimer. Heterodimer; with jun-1. Interacts with kgb-1 and hda-1. In terms of processing, may be phosphorylated by kgb-1. Phosphorylation at Thr-440 increases sensitivity to heavy metal stress. Phosphorylation inhibits homodimer formation, and promotes association with target promoters. As to expression, expressed in anchor cells. Isoform a is expressed in somatic gonad cells that neighbor anchor cells. Isoform b is expressed in vulval cells, the uterine cells that neighbor anchor cells and the spermatheca.

The protein resides in the nucleus. Developmentally regulated transcription factor which binds and recognizes the enhancer DNA sequence 5'-TGA[CG]TCA-3'. Functionally, plays a role the development of the reproductive system, controlling events including anchor cell (AC) fusion and invasion. Regulates downstream transcriptional targets, including zmp-1, cdh-3, him-4 and mig10b, to promote the removal of the gonadal basement membrane during AC invasion. Regulates aff-1 expression to promote AC fusion. With jun-1 regulates egl-1 and lin-12 expression to allow uterine cell specification and development. Its function is as follows. Required for ovulation. Controls plc-1 expression in the spermatheca to regulate spermathecal valve dilation. Acts with hda-1 as a downstream repressor of the kgb-1 mediated stress response pathway that transcriptionally represses genes involved in the response to heavy metals, such as kreg-1. The sequence is that of Transcription factor fos-1 from Caenorhabditis elegans.